The primary structure comprises 82 residues: ATP synthase subunit c (82 aa).

2 helical membrane-spanning segments follow: residues 7 to 27 and 57 to 77; these read AASV…PGIG and LAFM…LLFA.

This sequence belongs to the ATPase C chain family. In terms of assembly, F-type ATPases have 2 components, F(1) - the catalytic core - and F(0) - the membrane proton channel. F(1) has five subunits: alpha(3), beta(3), gamma(1), delta(1), epsilon(1). F(0) has four main subunits: a(1), b(1), b'(1) and c(10-14). The alpha and beta chains form an alternating ring which encloses part of the gamma chain. F(1) is attached to F(0) by a central stalk formed by the gamma and epsilon chains, while a peripheral stalk is formed by the delta, b and b' chains.

It localises to the cellular thylakoid membrane. F(1)F(0) ATP synthase produces ATP from ADP in the presence of a proton or sodium gradient. F-type ATPases consist of two structural domains, F(1) containing the extramembraneous catalytic core and F(0) containing the membrane proton channel, linked together by a central stalk and a peripheral stalk. During catalysis, ATP synthesis in the catalytic domain of F(1) is coupled via a rotary mechanism of the central stalk subunits to proton translocation. Its function is as follows. Key component of the F(0) channel; it plays a direct role in translocation across the membrane. A homomeric c-ring of between 10-14 subunits forms the central stalk rotor element with the F(1) delta and epsilon subunits. This Synechococcus sp. (strain WH7803) protein is ATP synthase subunit c.